Consider the following 116-residue polypeptide: NADPH-dependent 7-cyano-7-deazaguanine reductase (116 aa).

Cys31 functions as the Thioimide intermediate in the catalytic mechanism. Asp38 (proton donor) is an active-site residue. Residues 53-55 (VEL) and 72-73 (YE) each bind substrate.

Belongs to the GTP cyclohydrolase I family. QueF type 1 subfamily.

The protein resides in the cytoplasm. It catalyses the reaction 7-aminomethyl-7-carbaguanine + 2 NADP(+) = 7-cyano-7-deazaguanine + 2 NADPH + 3 H(+). It functions in the pathway tRNA modification; tRNA-queuosine biosynthesis. Functionally, catalyzes the NADPH-dependent reduction of 7-cyano-7-deazaguanine (preQ0) to 7-aminomethyl-7-deazaguanine (preQ1). The sequence is that of NADPH-dependent 7-cyano-7-deazaguanine reductase from Chlorobium phaeovibrioides (strain DSM 265 / 1930) (Prosthecochloris vibrioformis (strain DSM 265)).